The following is a 227-amino-acid chain: Phosphoribosylformylglycinamidine synthase subunit PurQ (227 aa).

The Glutamine amidotransferase type-1 domain occupies arginine 2 to arginine 227. Cysteine 85 (nucleophile) is an active-site residue. Residues histidine 200 and glutamate 202 contribute to the active site.

In terms of assembly, part of the FGAM synthase complex composed of 1 PurL, 1 PurQ and 2 PurS subunits.

Its subcellular location is the cytoplasm. It catalyses the reaction N(2)-formyl-N(1)-(5-phospho-beta-D-ribosyl)glycinamide + L-glutamine + ATP + H2O = 2-formamido-N(1)-(5-O-phospho-beta-D-ribosyl)acetamidine + L-glutamate + ADP + phosphate + H(+). It carries out the reaction L-glutamine + H2O = L-glutamate + NH4(+). The protein operates within purine metabolism; IMP biosynthesis via de novo pathway; 5-amino-1-(5-phospho-D-ribosyl)imidazole from N(2)-formyl-N(1)-(5-phospho-D-ribosyl)glycinamide: step 1/2. Part of the phosphoribosylformylglycinamidine synthase complex involved in the purines biosynthetic pathway. Catalyzes the ATP-dependent conversion of formylglycinamide ribonucleotide (FGAR) and glutamine to yield formylglycinamidine ribonucleotide (FGAM) and glutamate. The FGAM synthase complex is composed of three subunits. PurQ produces an ammonia molecule by converting glutamine to glutamate. PurL transfers the ammonia molecule to FGAR to form FGAM in an ATP-dependent manner. PurS interacts with PurQ and PurL and is thought to assist in the transfer of the ammonia molecule from PurQ to PurL. This Thermus thermophilus (strain ATCC 27634 / DSM 579 / HB8) protein is Phosphoribosylformylglycinamidine synthase subunit PurQ.